An 81-amino-acid chain; its full sequence is Photosystem I iron-sulfur center (81 aa).

4Fe-4S ferredoxin-type domains follow at residues 2-31 (AHSVKIYDTCIGCTQCVRACPTDVLEMIPW) and 39-68 (IASAPRTEDCAGCKRCESACPTDFLSVRVY). Cysteine 11, cysteine 14, cysteine 17, cysteine 21, cysteine 48, cysteine 51, cysteine 54, and cysteine 58 together coordinate [4Fe-4S] cluster.

As to quaternary structure, the eukaryotic PSI reaction center is composed of at least 11 subunits. [4Fe-4S] cluster is required as a cofactor.

It is found in the plastid. The protein resides in the chloroplast thylakoid membrane. The catalysed reaction is reduced [plastocyanin] + hnu + oxidized [2Fe-2S]-[ferredoxin] = oxidized [plastocyanin] + reduced [2Fe-2S]-[ferredoxin]. Functionally, apoprotein for the two 4Fe-4S centers FA and FB of photosystem I (PSI); essential for photochemical activity. FB is the terminal electron acceptor of PSI, donating electrons to ferredoxin. The C-terminus interacts with PsaA/B/D and helps assemble the protein into the PSI complex. Required for binding of PsaD and PsaE to PSI. PSI is a plastocyanin-ferredoxin oxidoreductase, converting photonic excitation into a charge separation, which transfers an electron from the donor P700 chlorophyll pair to the spectroscopically characterized acceptors A0, A1, FX, FA and FB in turn. The chain is Photosystem I iron-sulfur center from Pinus thunbergii (Japanese black pine).